The primary structure comprises 75 residues: Small integral membrane protein 7 (75 aa).

The first 17 residues, 1–17 (MIGDILLFGTLLMNAGA), serve as a signal peptide directing secretion. Over 18–53 (VLNFKLKKKDTQGFGEESKEPSTGDNIREFLLSLRY) the chain is Extracellular. The helical transmembrane segment at 54–74 (FRIFIALWNVFMMLCMIVLFG) threads the bilayer. Ser75 is a topological domain (cytoplasmic).

The protein belongs to the SMIM7 family.

It localises to the membrane. This is Small integral membrane protein 7 (Smim7) from Mus musculus (Mouse).